A 111-amino-acid chain; its full sequence is PCNA-associated factor (111 aa).

Residues methionine 1–proline 10 are compositionally biased toward polar residues. The disordered stretch occupies residues methionine 1–glutamate 111. At serine 8 the chain carries Phosphoserine. Residue lysine 15 forms a Glycyl lysine isopeptide (Lys-Gly) (interchain with G-Cter in ubiquitin) linkage. Residues arginine 23–asparagine 34 carry the D-box motif. Lysine 24 carries the post-translational modification N6-acetyllysine; alternate. Lysine 24 is covalently cross-linked (Glycyl lysine isopeptide (Lys-Gly) (interchain with G-Cter in ubiquitin); alternate). The segment covering glycine 27 to serine 39 has biased composition (polar residues). Phosphoserine is present on residues serine 28, serine 31, and serine 72. A PIP-box motif is present at residues glutamine 62–serine 72. Over residues lysine 74–glutamate 84 the composition is skewed to basic and acidic residues. The short motif at lysine 78–asparagine 80 is the KEN box element. The short motif at glutamate 85–lysine 97 is the Initiation motif element.

In terms of assembly, interacts (when monoubiquitinated at Lys-15 and Lys-24) with PCNA. Interacts with isoform 2/p33ING1b of ING1. Interacts with BRCA1. Monoubiquitinated at Lys-15 and Lys-24 during normal S phase, promoting its association with PCNA. Also diubiquitinated at these 2 sites. Following DNA damage, monoubiquitin chains at Lys-15 and Lys-24 are probably extended, leading to disrupt the interaction with PCNA. Polyubiquitinated by the APC/C complex at the mitotic exit, leading to its degradation by the proteasome.

The protein resides in the nucleus. It is found in the cytoplasm. The protein localises to the perinuclear region. Its function is as follows. PCNA-binding protein that acts as a regulator of DNA repair during DNA replication. Following DNA damage, the interaction with PCNA is disrupted, facilitating the interaction between monoubiquitinated PCNA and the translesion DNA synthesis DNA polymerase eta (POLH) at stalled replisomes, facilitating the bypass of replication-fork-blocking lesions. Also acts as a regulator of centrosome number. This is PCNA-associated factor from Bos taurus (Bovine).